The chain runs to 447 residues: uncharacterized protein (447 aa).

Residues 392-435 (RFTKPSSSVAKSTSPSLRNSGSDESDLNQSDSDKEDERVVPVPK) are disordered. The segment covering 395–407 (KPSSSVAKSTSPS) has biased composition (low complexity). A compositionally biased stretch (polar residues) spans 408–421 (LRNSGSDESDLNQS).

This is an uncharacterized protein from Invertebrate iridescent virus 3 (IIV-3).